The following is a 121-amino-acid chain: MHEVTRTYYFFLFFFLSYKRQINAAFIALFDFPLLFIYFPFLILVLFYNSNANLTAIRNTYSISSRLNPSGAFLTHEECGLVLQYIYYWLGLENKFIDLGCNSLSVVCFLADLRVYLRVPG.

Helical transmembrane passes span 26 to 46 and 72 to 92; these read FIALFDFPLLFIYFPFLILVL and AFLTHEECGLVLQYIYYWLGL.

Its subcellular location is the membrane. This is an uncharacterized protein from Saccharomyces cerevisiae (strain ATCC 204508 / S288c) (Baker's yeast).